A 504-amino-acid polypeptide reads, in one-letter code: MTNFFDILSERKGQLFSTMIEHIQISFIALLIATAIAVPLGILLTKTKTISEIVMNIAAILQTIPSLALLGLMIPLFGIGRVPAIIALVVYALLPILRNTYTGIKEVDPSLIEAAKGIGMKPFRRLTKVELPIAMPVIMAGVRTAMVLIIGTATLAALIGAGGLGDLILLGIDRNNASLILLGAIPAALLAIIFDLILRFMAKLSYKKLLMTLGVIVMIIILAIAIPMFAQKGDKITLAGKLGSEPSIITNMYKILIEEETKNTVEVKDGMGKTAFLFNALKSDDIDGYLEFTGTVLGELTKEPLKSKEEKKVYEQAKQSLEKKYQMTMLKPMKYNNTYALAVKRDFAKQHNIRTIGDLNKVKDQLKPGFTLEFNDRPDGYKAVQKAYNLNLDNIRTMEPKLRYQAINKGNINLIDAYSTDAELKQYDMVVLKDDKHVFPPYQGAPLFKESFLKKHPEIKKPLNKLENKISDEDMQMMNYKVTVKNEDPYTVAKDYLKAKGLIK.

The ABC transmembrane type-1 domain maps to 19 to 198 (MIEHIQISFI…LLAIIFDLIL (180 aa)). Helical transmembrane passes span 25-45 (ISFI…ILLT), 49-69 (TISE…SLAL), 70-90 (LGLM…ALVV), 145-165 (AMVL…GGLG), 178-198 (SLIL…DLIL), and 209-229 (LLMT…IPMF). An ergothioneine binding domain region spans residues 231–504 (QKGDKITLAG…DYLKAKGLIK (274 aa)).

This sequence in the N-terminal section; belongs to the binding-protein-dependent transport system permease family. It in the C-terminal section; belongs to the OsmX family. As to quaternary structure, the complex is probably composed of at least an ATP-binding protein (EgtUA) and a transmembrane protein (EgtUBC).

The protein resides in the membrane. In terms of biological role, part of an ABC transporter complex EgtU required for the uptake of ergothioneine (EGT), a natural low-molecular weight (LMW) thiol antioxidant. Responsible for the translocation of the substrate across the membrane. Also contains a C-terminal periplasmic solute-binding domain (SBD) which binds to EGT with sub-micromolar affinity. Probably does not bind L-hercynine. The chain is Probable ergothioneine transporter EgtUBC (egtUBC) from Staphylococcus aureus (strain USA300).